A 70-amino-acid polypeptide reads, in one-letter code: Translational regulator CsrA (70 aa).

Belongs to the CsrA/RsmA family. Homodimer; the beta-strands of each monomer intercalate to form a hydrophobic core, while the alpha-helices form wings that extend away from the core.

It is found in the cytoplasm. In terms of biological role, a translational regulator that binds mRNA to regulate translation initiation and/or mRNA stability. Usually binds in the 5'-UTR at or near the Shine-Dalgarno sequence preventing ribosome-binding, thus repressing translation. Its main target seems to be the major flagellin gene, while its function is anatagonized by FliW. The sequence is that of Translational regulator CsrA from Clostridioides difficile (strain 630) (Peptoclostridium difficile).